The primary structure comprises 318 residues: Protoheme IX farnesyltransferase (318 aa).

9 consecutive transmembrane segments (helical) span residues 29 to 49, 51 to 71, 102 to 122, 123 to 143, 151 to 171, 179 to 199, 219 to 239, 241 to 261, and 280 to 300; these read IIPL…QGQV, PVLL…AQTI, LIFA…FANL, LAAS…THWL, IVIG…AVTG, LIFA…ALMI, ATVK…LLLV, PLHS…AVFI, and LFLY…IDSL.

This sequence belongs to the UbiA prenyltransferase family. Protoheme IX farnesyltransferase subfamily.

Its subcellular location is the cell inner membrane. The enzyme catalyses heme b + (2E,6E)-farnesyl diphosphate + H2O = Fe(II)-heme o + diphosphate. The protein operates within porphyrin-containing compound metabolism; heme O biosynthesis; heme O from protoheme: step 1/1. Converts heme B (protoheme IX) to heme O by substitution of the vinyl group on carbon 2 of heme B porphyrin ring with a hydroxyethyl farnesyl side group. The sequence is that of Protoheme IX farnesyltransferase from Trichormus variabilis (strain ATCC 29413 / PCC 7937) (Anabaena variabilis).